Reading from the N-terminus, the 181-residue chain is UPF0228 protein MA_3117 (181 aa).

Belongs to the UPF0228 family.

In Methanosarcina acetivorans (strain ATCC 35395 / DSM 2834 / JCM 12185 / C2A), this protein is UPF0228 protein MA_3117.